The following is a 275-amino-acid chain: Exosome complex component Rrp42 (275 aa).

The protein belongs to the RNase PH family. Rrp42 subfamily. Component of the archaeal exosome complex. Forms a hexameric ring-like arrangement composed of 3 Rrp41-Rrp42 heterodimers. The hexameric ring associates with a trimer of Rrp4 and/or Csl4 subunits.

Its subcellular location is the cytoplasm. Non-catalytic component of the exosome, which is a complex involved in RNA degradation. Contributes to the structuring of the Rrp41 active site. The chain is Exosome complex component Rrp42 from Saccharolobus islandicus (strain Y.N.15.51 / Yellowstone #2) (Sulfolobus islandicus).